A 551-amino-acid polypeptide reads, in one-letter code: E3 ubiquitin-protein ligase HEL1 (551 aa).

The TRIAD supradomain stretch occupies residues 175–388 (NDFTCIICCD…KNFFQCTMYK (214 aa)). C179, C182, C200, C203, C301, C304, H309, C314, C341, and C344 together coordinate Zn(2+). An RING-type 1 zinc finger spans residues 179–225 (CIICCDKKDTETFALECGHEYCINCYRHYIKDKLHEGNIITCMDCSL). The IBR-type zinc-finger motif lies at 242-314 (SKLMDSSIKS…GFEVHSPADC (73 aa)). The RING-type 2; atypical zinc finger occupies 341-370 (CPKCSVNIEKNGGCNHMVCSSCKYEFCWIC). C354 is an active-site residue. Zn(2+) is bound by residues C359, C362, C367, C370, H377, and C384.

This sequence belongs to the RBR family. Interacts with the E2 ubiquitin-conjugating enzyme UBC4 and histones H3 and H4.

The enzyme catalyses [E2 ubiquitin-conjugating enzyme]-S-ubiquitinyl-L-cysteine + [acceptor protein]-L-lysine = [E2 ubiquitin-conjugating enzyme]-L-cysteine + [acceptor protein]-N(6)-ubiquitinyl-L-lysine.. The protein operates within protein modification; protein ubiquitination. Probable ubiquitin-protein ligase involved in the degradation-related ubiquitination of histones. Contributes to the post-translational regulation of histone protein levels by polyubiquitination of excess histones for subsequent degradation. This chain is E3 ubiquitin-protein ligase HEL1, found in Saccharomyces cerevisiae (strain ATCC 204508 / S288c) (Baker's yeast).